The primary structure comprises 137 residues: Small ribosomal subunit protein uS12 (137 aa).

The disordered stretch occupies residues 1 to 20 (MPTTNQLVNRGRTSKVQKQN). Aspartate 102 is subject to 3-methylthioaspartic acid.

This sequence belongs to the universal ribosomal protein uS12 family. Part of the 30S ribosomal subunit. Contacts proteins S8 and S17. May interact with IF1 in the 30S initiation complex.

With S4 and S5 plays an important role in translational accuracy. Its function is as follows. Interacts with and stabilizes bases of the 16S rRNA that are involved in tRNA selection in the A site and with the mRNA backbone. Located at the interface of the 30S and 50S subunits, it traverses the body of the 30S subunit contacting proteins on the other side and probably holding the rRNA structure together. The combined cluster of proteins S8, S12 and S17 appears to hold together the shoulder and platform of the 30S subunit. This is Small ribosomal subunit protein uS12 from Mycoplasmopsis synoviae (strain 53) (Mycoplasma synoviae).